The following is a 142-amino-acid chain: Ribosome-binding factor A (142 aa).

Positions 120–142 are disordered; that stretch reads TLGEVQSESDQPTTYETTTVNKT. Polar residues predominate over residues 123–142; sequence EVQSESDQPTTYETTTVNKT.

Belongs to the RbfA family. As to quaternary structure, monomer. Binds 30S ribosomal subunits, but not 50S ribosomal subunits or 70S ribosomes.

The protein resides in the cytoplasm. One of several proteins that assist in the late maturation steps of the functional core of the 30S ribosomal subunit. Associates with free 30S ribosomal subunits (but not with 30S subunits that are part of 70S ribosomes or polysomes). Required for efficient processing of 16S rRNA. May interact with the 5'-terminal helix region of 16S rRNA. The polypeptide is Ribosome-binding factor A (Prochlorococcus marinus (strain MIT 9313)).